The primary structure comprises 744 residues: Dolasta-1(15),8-diene synthase (744 aa).

Positions 1 to 344 (MASTMMNYQD…RRYNPAAPLP (344 aa)) are terpene cyclase. Positions 108 and 112 each coordinate Mg(2+). Residues aspartate 108, aspartate 112, 198–201 (RHYD), 246–250 (SWDKE), and 336–337 (RY) contribute to the substrate site. Residues 108-112 (DDLTD) carry the DDXXD motif. The segment at 345–744 (RREDIGKVNG…LHLITFQLKV (400 aa)) is prenyltransferase. A disordered region spans residues 399-422 (YTTMTPAETSSDDKKKKAKASHET). Residues 409–422 (SDDKKKKAKASHET) are compositionally biased toward basic and acidic residues. 2 residues coordinate isopentenyl diphosphate: arginine 459 and histidine 488. Mg(2+) contacts are provided by aspartate 495 and aspartate 499. The DDXXD motif lies at 495 to 499 (DDVQD). Arginine 504 is a binding site for dimethylallyl diphosphate. Arginine 505 contacts isopentenyl diphosphate. Positions 581, 582, and 617 each coordinate dimethylallyl diphosphate.

The protein in the N-terminal section; belongs to the terpene synthase family. This sequence in the C-terminal section; belongs to the FPP/GGPP synthase family. Hexamer. The cofactor is Mg(2+).

It carries out the reaction isopentenyl diphosphate + (2E,6E)-farnesyl diphosphate = (2E,6E,10E)-geranylgeranyl diphosphate + diphosphate. It catalyses the reaction (2E,6E,10E)-geranylgeranyl diphosphate = (5R,12R,14S)-dolasta-1(15),8-diene + diphosphate. The enzyme catalyses (2E,6E,10E)-geranylgeranyl diphosphate = delta-araneosene + diphosphate. Bifunctional terpene synthase involved in the biosynthesis of the diterpenes delta-araneosene and dolasta-1(15),8-diene. The C-terminal prenyltransferase domain of CgDS catalyzes formation of the universal precursor of diterpene, geranylgeranyl diphosphate (GGPP), whereas the N-terminal terpene cyclase domain catalyzes the cyclization of GGPP to the intermediate delta-araneosene that is further converted to dolasta-1(15),8-diene in a second cyclization event. In some cases the cyclization stops at the delta-araneosene stage. This Colletotrichum gloeosporioides (Anthracnose fungus) protein is Dolasta-1(15),8-diene synthase.